We begin with the raw amino-acid sequence, 414 residues long: 26S proteasome regulatory subunit 6B homolog (414 aa).

The disordered stretch occupies residues 1–33 (MAATMVLDPKPSSTPPPTLPNPYTTDSQSTDSE). Residues 21-30 (NPYTTDSQST) show a composition bias toward low complexity. Residues 55-81 (EYVKDELKNLKREQLRSQEEVKRIQSV) are a coiled coil. ATP is bound at residue 202-209 (GPPGTGKT).

The protein belongs to the AAA ATPase family.

The protein resides in the cytoplasm. It is found in the nucleus. In terms of biological role, the 26S proteasome is involved in the ATP-dependent degradation of ubiquitinated proteins. The regulatory (or ATPase) complex confers ATP dependency and substrate specificity to the 26S complex. The polypeptide is 26S proteasome regulatory subunit 6B homolog (Helianthus annuus (Common sunflower)).